The sequence spans 474 residues: Polyamine oxidase 7 (474 aa).

An N-terminal signal peptide occupies residues 1-27; the sequence is MTKPTTMAIFLSIVLLSMAQLPSLVAG. FAD is bound by residues E61 and R69. N-linked (GlcNAc...) asparagine glycosylation is found at N103 and N150. V261 lines the FAD pocket. A glycan (N-linked (GlcNAc...) asparagine) is linked at N278. E454 is a binding site for FAD.

This sequence belongs to the flavin monoamine oxidase family. FAD serves as cofactor.

The protein localises to the secreted. Its subcellular location is the extracellular space. The protein resides in the apoplast. It carries out the reaction spermine + O2 + H2O = 3-aminopropanal + spermidine + H2O2. The enzyme catalyses N(1)-acetylspermine + O2 + H2O = 3-acetamidopropanal + spermidine + H2O2. It catalyses the reaction norspermine + O2 + H2O = norspermidine + 3-aminopropanal + H2O2. The catalysed reaction is spermidine + O2 + H2O = 3-aminopropanal + putrescine + H2O2. It carries out the reaction N(1)-acetylspermidine + O2 + H2O = 3-acetamidopropanal + putrescine + H2O2. The enzyme catalyses thermospermine + O2 + H2O = 3-aminopropanal + spermidine + H2O2. It functions in the pathway amine and polyamine degradation; spermidine degradation. Its pathway is amine and polyamine degradation; spermine degradation. In terms of biological role, flavoenzyme involved in polyamine back-conversion. Catalyzes the oxidation of the secondary amino group of polyamines, such as spermine, spermidine and their acetyl derivatives. Substrate preference is spermine &gt; spermidine &gt; N(1)-acetylspermine &gt; N(1)-acetylspermidine &gt; norspermine &gt; thermospermine. No activity detected when putrescine is used as substrate. May play a role in producing hydrogen peroxide for secondary wall thickening through lignin formation during anther development. The polypeptide is Polyamine oxidase 7 (Oryza sativa subsp. japonica (Rice)).